Here is a 496-residue protein sequence, read N- to C-terminus: Beta-amylase (496 aa).

D54, H94, and D102 together coordinate substrate. E187 serves as the catalytic Proton donor. The substrate site is built by K296, H301, and T343. Catalysis depends on E381, which acts as the Proton acceptor. Residues N382–A383 and R421 contribute to the substrate site.

This sequence belongs to the glycosyl hydrolase 14 family.

The catalysed reaction is Hydrolysis of (1-&gt;4)-alpha-D-glucosidic linkages in polysaccharides so as to remove successive maltose units from the non-reducing ends of the chains.. The chain is Beta-amylase (BMY1) from Vigna unguiculata (Cowpea).